Reading from the N-terminus, the 129-residue chain is Small ribosomal subunit protein uS11 (129 aa).

The protein belongs to the universal ribosomal protein uS11 family. As to quaternary structure, part of the 30S ribosomal subunit. Interacts with proteins S7 and S18. Binds to IF-3.

Functionally, located on the platform of the 30S subunit, it bridges several disparate RNA helices of the 16S rRNA. Forms part of the Shine-Dalgarno cleft in the 70S ribosome. The chain is Small ribosomal subunit protein uS11 from Yersinia pseudotuberculosis serotype O:1b (strain IP 31758).